A 156-amino-acid chain; its full sequence is Lipoprotein signal peptidase (156 aa).

3 helical membrane passes run 5–25 (FKFI…DQWV), 64–84 (YLHL…KTLL), and 89–109 (IAFG…FIHG). Catalysis depends on residues Asp-113 and Asp-130. Residues 122–142 (NFAIFNVADVMINISVALILI) form a helical membrane-spanning segment.

The protein belongs to the peptidase A8 family.

It localises to the cell inner membrane. The catalysed reaction is Release of signal peptides from bacterial membrane prolipoproteins. Hydrolyzes -Xaa-Yaa-Zaa-|-(S,diacylglyceryl)Cys-, in which Xaa is hydrophobic (preferably Leu), and Yaa (Ala or Ser) and Zaa (Gly or Ala) have small, neutral side chains.. Its pathway is protein modification; lipoprotein biosynthesis (signal peptide cleavage). Functionally, this protein specifically catalyzes the removal of signal peptides from prolipoproteins. The protein is Lipoprotein signal peptidase of Campylobacter jejuni subsp. jejuni serotype O:6 (strain 81116 / NCTC 11828).